Consider the following 594-residue polypeptide: Actin-histidine N-methyltransferase (594 aa).

Positions 1–23 (MGKKSRVKTQKSGTGATASVSPK) are disordered. The segment covering 10–23 (QKSGTGATASVSPK) has biased composition (polar residues). S-adenosyl-L-methionine contacts are provided by residues Arg75, 104-106 (EGF), Arg254, 275-279 (DMCNH), and 325-327 (SGF). In terms of domain architecture, SET spans 94-314 (EGFEMVSFKE…AGEQIYIFYG (221 aa)). Residues 553–594 (INGENSIPNGTRLEKEDLNQEQSKRVTEDAKEPSDSTEEVKE) form a disordered region. The span at 564–594 (RLEKEDLNQEQSKRVTEDAKEPSDSTEEVKE) shows a compositional bias: basic and acidic residues.

This sequence belongs to the class V-like SAM-binding methyltransferase superfamily. SETD3 actin-histidine methyltransferase family. Interacts with MYOD1. Post-translationally, phosphorylated by GSK3B, which is required for recognition by the SCF(FBXW7) complex and subsequent degradation. In terms of processing, ubiquitinated by the SCF(FBXW7) complex following phosphorylation by GSK3B, leading to its degradation by the proteasome.

Its subcellular location is the cytoplasm. It localises to the nucleus. The enzyme catalyses L-histidyl-[protein] + S-adenosyl-L-methionine = N(tele)-methyl-L-histidyl-[protein] + S-adenosyl-L-homocysteine + H(+). Its function is as follows. Protein-histidine N-methyltransferase that specifically mediates 3-methylhistidine (tele-methylhistidine) methylation of actin at 'His-73'. Histidine methylation of actin is required for smooth muscle contraction of the laboring uterus during delivery. Does not have protein-lysine N-methyltransferase activity and probably only catalyzes histidine methylation of actin. The protein is Actin-histidine N-methyltransferase of Rhinolophus ferrumequinum (Greater horseshoe bat).